The sequence spans 1732 residues: Transient receptor potential cation channel subfamily M member 3 (1732 aa).

The Cytoplasmic portion of the chain corresponds to 1-894 (MPGPWGTVYF…RKIYEFYNAP (894 aa)). Calmodulin-binding stretches follow at residues 41–64 (WTIR…QKSW), 192–215 (NFEL…MTTG), 300–323 (TGKY…QKIN), 601–624 (RKRF…KLLG), and 793–816 (RKNS…LEFK). The interval 617 to 625 (PKALKLLGM) is required for the inhibitory action of G-beta/gamma-subunits of heterotrimeric G-proteins. Residue Ser-796 participates in 1,2-dioctanoyl-sn-glycero-3-phospho-(1D-myo-inositol-4,5-bisphosphate) binding. The tract at residues 829–851 (EIHLQEKEPEEPEKPTKEKDEED) is disordered. Over residues 831–847 (HLQEKEPEEPEKPTKEK) the composition is skewed to basic and acidic residues. A helical transmembrane segment spans residues 895 to 918 (IVKFWFYTLAYIGYLMLFNYIVLV). The Extracellular portion of the chain corresponds to 919–925 (KMERWPS). Residues 926 to 948 (TQEWIVISYIFTLGIEKMREILM) traverse the membrane as a helical segment. Topologically, residues 949–964 (SEPGKLLQKVKVWLQE) are cytoplasmic. A helical transmembrane segment spans residues 965–985 (YWNVTDLIAILLFSVGMILRL). Residues 986–989 (QDQP) lie on the Extracellular side of the membrane. A helical membrane pass occupies residues 990 to 1013 (FRSDGRVIYCVNIIYWYIRLLDIF). The Cytoplasmic segment spans residues 1014–1028 (GVNKYLGPYVMMIGK). Positions 1017 and 1018 each coordinate 1,2-dioctanoyl-sn-glycero-3-phospho-(1D-myo-inositol-4,5-bisphosphate). A helical transmembrane segment spans residues 1029 to 1056 (MMIDMMYFVIIMLVVLMSFGVARQAILF). Topologically, residues 1057–1073 (PNEEPSWKLAKNIFYMP) are extracellular. Positions 1074 to 1101 (YWMIYGEVFADQIDPPCGQNETREDGKT) form an intramembrane region, pore-forming. Residues 1102 to 1111 (IQLPPCKTGA) lie on the Extracellular side of the membrane. The chain crosses the membrane as a helical span at residues 1112–1137 (WIVPAIMACYLLVANILLVNLLIAVF). The Cytoplasmic portion of the chain corresponds to 1138–1732 (NNTFFEVKSI…AFHSFESKHN (595 aa)). Residues 1610–1732 (EREAELSHPS…AFHSFESKHN (123 aa)) are disordered. 2 stretches are compositionally biased toward polar residues: residues 1635–1653 (PISS…NNIT) and 1690–1701 (NTASLRNPFQRS).

This sequence belongs to the transient receptor (TC 1.A.4) family. LTrpC subfamily. TRPM3 sub-subfamily. Homotetramer. Interacts with TRPM1; the interaction results in the formation of a heteromultimeric cation channel complex that are functionally different from the homomeric channels.

Its subcellular location is the cell membrane. The enzyme catalyses Ca(2+)(in) = Ca(2+)(out). It catalyses the reaction Mn(2+)(in) = Mn(2+)(out). It carries out the reaction Zn(2+)(in) = Zn(2+)(out). The catalysed reaction is Mg(2+)(in) = Mg(2+)(out). The enzyme catalyses Na(+)(in) = Na(+)(out). With respect to regulation, activated by the neurosteroid pregnelonone sulfate (PregS). PregS activates the channel by shifting its current-voltage activation curve toward more negative membrane potentials and also potentiates temperature-induced activation. Activated by heat. Intracellular Ca(2+) inhibits TRPM3 probably via interaction with Ca(2+)/calmodulin. Intracellular Mg(2+) inhibits TRPM3 activity. Both intracellular and extracellular protons block TRPM3 through propable binding sites in the pore region. Positively regulated by phosphoinositide phosphoinositol 4,5-biphosphate (PI(4,5)P2). Strongly inhibited by activation of G(i)-coupled receptors via direct binding with G-beta/gamma-subunits of heterotrimeric G-proteins. Its activity is regulated as follows. Insensitive to pregnenolone sulfate (PregS) or heat. Not inhibited by G-beta/gamma-subunits of heterotrimeric G-proteins. Functionally, constitutively active, non-selective divalent cation-conducting channel that is permeable to Ca(2+), Mn(2+), and Mg(2+), with a high permeability for Ca(2+). However, can be enhanced by increasing temperature and by ligands, including the endogenous neurosteroid pregnenolone sulfate and sphingosine-1 and suppressed by intracellular Mg(2+). Implicated in a variety of cellular processes, including insulin/peptide secretion, vascular constriction and dilation, noxious heat sensing, inflammatory and spontaneous pain sensitivity. In neurons of the dorsal root ganglia, functions as thermosensitive channel for the detection of noxious heat and spontaneous pain. Suggested to function as an ionotropic steroid receptor in beta-cell, indeed pregnenolone sulfate leads to Ca(2+) influx and enhanced insulin secretion. Mediates Zn(2+) uptake into the lumen of pancreatic beta cell secretory granules, thereby regulating insulin secretion. Forms heteromultimeric ion channels with TRPM1 which are permeable for Ca(2+) and Zn(2+) ions. Exists as multiple splice variants which differ significantly in their biophysical properties. Its function is as follows. Displays strongly reduced permeability for divalent cations and high selectivity toward monovalent cations. No channel activity. The protein is Transient receptor potential cation channel subfamily M member 3 of Mus musculus (Mouse).